Consider the following 210-residue polypeptide: Protein SYM1 (210 aa).

Transmembrane regions (helical) follow at residues Ile22–Phe39, Ala68–Tyr84, Leu112–Leu129, and Leu173–Tyr189.

This sequence belongs to the peroxisomal membrane protein PXMP2/4 family.

The protein localises to the mitochondrion inner membrane. Its function is as follows. May be involved in cellular response to stress. Required to maintain mitochondrial DNA (mtDNA) integrity and stability. The protein is Protein SYM1 (SYM1) of Candida glabrata (strain ATCC 2001 / BCRC 20586 / JCM 3761 / NBRC 0622 / NRRL Y-65 / CBS 138) (Yeast).